A 275-amino-acid polypeptide reads, in one-letter code: Small ribosomal subunit protein uS3 (275 aa).

A KH type-2 domain is found at 38 to 106 (IRKLLATGLE…QVQLNILEVK (69 aa)). The tract at residues 215-275 (AAAAPASDRP…AEAPAESTES (61 aa)) is disordered. Positions 237–275 (SGSAGTTATSTEAGRAATSDAPAAGTAAAAEAPAESTES) are enriched in low complexity.

The protein belongs to the universal ribosomal protein uS3 family. Part of the 30S ribosomal subunit. Forms a tight complex with proteins S10 and S14.

In terms of biological role, binds the lower part of the 30S subunit head. Binds mRNA in the 70S ribosome, positioning it for translation. This chain is Small ribosomal subunit protein uS3, found in Mycolicibacterium smegmatis (strain ATCC 700084 / mc(2)155) (Mycobacterium smegmatis).